The primary structure comprises 361 residues: Adenosine kinase (361 aa).

The short motif at 7 to 15 (PKPKKLKVE) is the Nuclear localization signal element. Aspartate 34 provides a ligand contact to adenosine. Serine 48 serves as a coordination point for Mg(2+). Residue tyrosine 76 is modified to Phosphotyrosine. Mg(2+)-binding residues include aspartate 146 and asparagine 147. Glutamine 305 lines the adenosine pocket. Aspartate 316 is an active-site residue. Aspartate 316 acts as the Proton acceptor in catalysis.

Belongs to the carbohydrate kinase PfkB family. In terms of assembly, monomer. Mg(2+) serves as cofactor. Post-translationally, the N-terminus is blocked.

The protein resides in the nucleus. It catalyses the reaction adenosine + ATP = AMP + ADP + H(+). Its pathway is purine metabolism; AMP biosynthesis via salvage pathway; AMP from adenosine: step 1/1. With respect to regulation, activity is inhibited by 5-iodotubercidin and 5'-amino-5'-deoxyadenosine. In terms of biological role, catalyzes the phosphorylation of the purine nucleoside adenosine at the 5' position in an ATP-dependent manner. Serves as a potential regulator of concentrations of extracellular adenosine and intracellular adenine nucleotides. This Cricetulus griseus (Chinese hamster) protein is Adenosine kinase (ADK).